Reading from the N-terminus, the 112-residue chain is Large ribosomal subunit protein bL20c (112 aa).

It belongs to the bacterial ribosomal protein bL20 family.

It localises to the plastid. The protein localises to the chloroplast. In terms of biological role, binds directly to 23S ribosomal RNA and is necessary for the in vitro assembly process of the 50S ribosomal subunit. It is not involved in the protein synthesizing functions of that subunit. The protein is Large ribosomal subunit protein bL20c (rpl20) of Chlamydomonas reinhardtii (Chlamydomonas smithii).